Here is a 163-residue protein sequence, read N- to C-terminus: 2-C-methyl-D-erythritol 2,4-cyclodiphosphate synthase (163 aa).

2 residues coordinate a divalent metal cation: aspartate 9 and histidine 11. Residues 9-11 (DVH) and 36-37 (HS) contribute to the 4-CDP-2-C-methyl-D-erythritol 2-phosphate site. Histidine 44 serves as a coordination point for a divalent metal cation. 4-CDP-2-C-methyl-D-erythritol 2-phosphate is bound by residues 58–60 (DIG), 63–67 (FPDDD), 134–137 (TTSE), phenylalanine 141, and arginine 144.

It belongs to the IspF family. As to quaternary structure, homotrimer. Requires a divalent metal cation as cofactor.

The catalysed reaction is 4-CDP-2-C-methyl-D-erythritol 2-phosphate = 2-C-methyl-D-erythritol 2,4-cyclic diphosphate + CMP. It participates in isoprenoid biosynthesis; isopentenyl diphosphate biosynthesis via DXP pathway; isopentenyl diphosphate from 1-deoxy-D-xylulose 5-phosphate: step 4/6. Functionally, involved in the biosynthesis of isopentenyl diphosphate (IPP) and dimethylallyl diphosphate (DMAPP), two major building blocks of isoprenoid compounds. Catalyzes the conversion of 4-diphosphocytidyl-2-C-methyl-D-erythritol 2-phosphate (CDP-ME2P) to 2-C-methyl-D-erythritol 2,4-cyclodiphosphate (ME-CPP) with a corresponding release of cytidine 5-monophosphate (CMP). This chain is 2-C-methyl-D-erythritol 2,4-cyclodiphosphate synthase, found in Halorhodospira halophila (strain DSM 244 / SL1) (Ectothiorhodospira halophila (strain DSM 244 / SL1)).